Here is a 396-residue protein sequence, read N- to C-terminus: Proteasome-activating nucleotidase (396 aa).

Residues 16–57 (ITYLKRRIRQLELQVRMLEADKERLERELSRLRSEMSRLRQP) adopt a coiled-coil conformation. Residues 181 to 186 (GCGKTL) and histidine 320 contribute to the ATP site. A docks into pockets in the proteasome alpha-ring to cause gate opening region spans residues 394–396 (IYG).

It belongs to the AAA ATPase family. As to quaternary structure, homohexamer. The hexameric complex has a two-ring architecture resembling a top hat that caps the 20S proteasome core at one or both ends. Upon ATP-binding, the C-terminus of PAN interacts with the alpha-rings of the proteasome core by binding to the intersubunit pockets.

Its subcellular location is the cytoplasm. In terms of biological role, ATPase which is responsible for recognizing, binding, unfolding and translocation of substrate proteins into the archaeal 20S proteasome core particle. Is essential for opening the gate of the 20S proteasome via an interaction with its C-terminus, thereby allowing substrate entry and access to the site of proteolysis. Thus, the C-termini of the proteasomal ATPase function like a 'key in a lock' to induce gate opening and therefore regulate proteolysis. Unfolding activity requires energy from ATP hydrolysis, whereas ATP binding alone promotes ATPase-20S proteasome association which triggers gate opening, and supports translocation of unfolded substrates. This Pyrococcus abyssi (strain GE5 / Orsay) protein is Proteasome-activating nucleotidase.